An 864-amino-acid polypeptide reads, in one-letter code: NT-3 growth factor receptor (864 aa).

The signal sequence occupies residues 1–31 (MDVSLCPAKCSFWRIFLLGSVWLDYVGSVLA). 2 cysteine pairs are disulfide-bonded: cysteine 32–cysteine 38 and cysteine 36–cysteine 45. The Extracellular portion of the chain corresponds to 32 to 429 (CPANCVCSKT…TVTHKPEEDT (398 aa)). Asparagine 68, asparagine 72, and asparagine 79 each carry an N-linked (GlcNAc...) asparagine glycan. LRR repeat units follow at residues 104-125 (GLQK…AFAK) and 128-149 (HLRY…LFQT). Asparagine 133 and asparagine 163 each carry an N-linked (GlcNAc...) asparagine glycan. Residues 160–209 (NFFNCSCDIRWMQLWQEQGEARLDSQSLYCISADGSQLPLFRMNISQCDL) form the LRRCT domain. Intrachain disulfides connect cysteine 164–cysteine 189 and cysteine 166–cysteine 207. Asparagine 203, asparagine 218, asparagine 232, asparagine 259, asparagine 267, asparagine 272, and asparagine 294 each carry an N-linked (GlcNAc...) asparagine glycan. Ig-like C2-type domains are found at residues 210–300 (PEIS…VALT) and 309–382 (SLVE…IAKN). A disulfide bridge links cysteine 231 with cysteine 284. An intrachain disulfide couples cysteine 320 to cysteine 362. N-linked (GlcNAc...) asparagine glycosylation is found at asparagine 375 and asparagine 388. A helical transmembrane segment spans residues 430–453 (FGVSIAVGLAAFACVLLVVLFIMI). At 454–864 (NKYGRRSKFG…ATPIYLDILG (411 aa)) the chain is on the cytoplasmic side. Position 493 is a phosphoserine (serine 493). Tyrosine 516 carries the post-translational modification Phosphotyrosine; by autocatalysis. A Protein kinase domain is found at 538-853 (IVLKRELGEG…EIYKILHALG (316 aa)). ATP is bound by residues 544–552 (LGEGAFGKV) and lysine 572. Aspartate 679 functions as the Proton acceptor in the catalytic mechanism. Phosphotyrosine; by autocatalysis is present on residues tyrosine 705, tyrosine 709, tyrosine 710, and tyrosine 859.

Belongs to the protein kinase superfamily. Tyr protein kinase family. Insulin receptor subfamily. In terms of assembly, exists in a dynamic equilibrium between monomeric (low affinity) and dimeric (high affinity) structures. Binds SH2B2. Interacts with SQSTM1 and KIDINS220. Interacts with PTPRS. Interacts with MAPK8IP3/JIP3. In terms of processing, ligand-mediated auto-phosphorylation. Widely expressed, mainly in the nervous tissue.

It is found in the membrane. It catalyses the reaction L-tyrosyl-[protein] + ATP = O-phospho-L-tyrosyl-[protein] + ADP + H(+). Its function is as follows. Receptor tyrosine kinase involved in nervous system and probably heart development. Upon binding of its ligand NTF3/neurotrophin-3, NTRK3 autophosphorylates and activates different signaling pathways, including the phosphatidylinositol 3-kinase/AKT and the MAPK pathways, that control cell survival and differentiation. NTRK3 isoforms containing insertions within the kinase domain can autophosphorylate in response to NTF3/neurotrophin-3, but cannot mediate downstream phenotypic responses. This Rattus norvegicus (Rat) protein is NT-3 growth factor receptor (Ntrk3).